A 357-amino-acid chain; its full sequence is Sorbitol dehydrogenase (357 aa).

Position 2 is an N-acetylalanine (A2). A Zn(2+)-binding site is contributed by C45. Residue Y51 coordinates substrate. Zn(2+) is bound by residues H70 and E71. E156 contributes to the substrate binding site. S169 carries the phosphoserine modification. Residues V184, D204, R209, 273–275 (VGM), and 297–299 (VFR) each bind NAD(+). Substrate-binding residues include R299 and Y300.

This sequence belongs to the zinc-containing alcohol dehydrogenase family. Homotetramer. Requires Zn(2+) as cofactor. In terms of tissue distribution, testis has the highest level of expression, followed by kidney, liver, and lung. Low levels of expression are also observed in lens, brain, and skeletal muscle. Expressed in sperm flagellum and very low expression in the sperm head.

It localises to the mitochondrion membrane. It is found in the cell projection. The protein localises to the cilium. Its subcellular location is the flagellum. It carries out the reaction keto-D-fructose + NADH + H(+) = D-sorbitol + NAD(+). It catalyses the reaction xylitol + NAD(+) = D-xylulose + NADH + H(+). The catalysed reaction is L-iditol + NAD(+) = keto-L-sorbose + NADH + H(+). With respect to regulation, inhibited in vitro by p-hydroxymercuribenzoate, EDTA, l,l0-phenanthroline and N-ethylmaleimide. Functionally, polyol dehydrogenase that catalyzes the reversible NAD(+)-dependent oxidation of various sugar alcohols. Is active with D-sorbitol (D-glucitol) leading to the C2-oxidized product D-fructose. Is a key enzyme in the polyol pathway that interconverts glucose and fructose via sorbitol, which constitutes an important alternate route for glucose metabolism. May play a role in sperm motility by using sorbitol as an alternative energy source for sperm motility and protein tyrosine phosphorylation. Has no activity on ethanol. Cannot use NADP(+) as the electron acceptor. In Mus musculus (Mouse), this protein is Sorbitol dehydrogenase (Sord).